The sequence spans 247 residues: Phosphoribosylaminoimidazole-succinocarboxamide synthase (247 aa).

It belongs to the SAICAR synthetase family.

It catalyses the reaction 5-amino-1-(5-phospho-D-ribosyl)imidazole-4-carboxylate + L-aspartate + ATP = (2S)-2-[5-amino-1-(5-phospho-beta-D-ribosyl)imidazole-4-carboxamido]succinate + ADP + phosphate + 2 H(+). Its pathway is purine metabolism; IMP biosynthesis via de novo pathway; 5-amino-1-(5-phospho-D-ribosyl)imidazole-4-carboxamide from 5-amino-1-(5-phospho-D-ribosyl)imidazole-4-carboxylate: step 1/2. This is Phosphoribosylaminoimidazole-succinocarboxamide synthase from Prochlorococcus marinus (strain NATL1A).